Here is a 918-residue protein sequence, read N- to C-terminus: Isoleucine--tRNA ligase (918 aa).

The short motif at 57-67 (PYANGHIHIGH) is the 'HIGH' region element. Glu564 provides a ligand contact to L-isoleucyl-5'-AMP. The short motif at 605-609 (KMSKS) is the 'KMSKS' region element. ATP is bound at residue Lys608. Positions 888, 891, 903, and 906 each coordinate Zn(2+).

Belongs to the class-I aminoacyl-tRNA synthetase family. IleS type 1 subfamily. As to quaternary structure, monomer. Zn(2+) is required as a cofactor.

It is found in the cytoplasm. It catalyses the reaction tRNA(Ile) + L-isoleucine + ATP = L-isoleucyl-tRNA(Ile) + AMP + diphosphate. Its function is as follows. Catalyzes the attachment of isoleucine to tRNA(Ile). As IleRS can inadvertently accommodate and process structurally similar amino acids such as valine, to avoid such errors it has two additional distinct tRNA(Ile)-dependent editing activities. One activity is designated as 'pretransfer' editing and involves the hydrolysis of activated Val-AMP. The other activity is designated 'posttransfer' editing and involves deacylation of mischarged Val-tRNA(Ile). This is Isoleucine--tRNA ligase from Nitratiruptor sp. (strain SB155-2).